Here is a 234-residue protein sequence, read N- to C-terminus: Sugar fermentation stimulation protein homolog (234 aa).

This sequence belongs to the SfsA family.

The protein is Sugar fermentation stimulation protein homolog of Shewanella piezotolerans (strain WP3 / JCM 13877).